The primary structure comprises 250 residues: PF03932 family protein CutC (250 aa).

It belongs to the CutC family.

The protein resides in the cytoplasm. In Proteus mirabilis (strain HI4320), this protein is PF03932 family protein CutC.